A 269-amino-acid chain; its full sequence is Energy-coupling factor transporter ATP-binding protein EcfA1 (269 aa).

Positions 8–242 constitute an ABC transporter domain; it reads IVFKNVSFQY…AEELTRIGLD (235 aa). 42-49 contributes to the ATP binding site; it reads GHNGSGKS.

This sequence belongs to the ABC transporter superfamily. Energy-coupling factor EcfA family. As to quaternary structure, forms a stable energy-coupling factor (ECF) transporter complex composed of 2 membrane-embedded substrate-binding proteins (S component), 2 ATP-binding proteins (A component) and 2 transmembrane proteins (T component).

Its subcellular location is the cell membrane. Its function is as follows. ATP-binding (A) component of a common energy-coupling factor (ECF) ABC-transporter complex. Unlike classic ABC transporters this ECF transporter provides the energy necessary to transport a number of different substrates. This is Energy-coupling factor transporter ATP-binding protein EcfA1 from Staphylococcus aureus (strain Mu50 / ATCC 700699).